A 118-amino-acid chain; its full sequence is Small ribosomal subunit protein uS13 (118 aa).

The disordered stretch occupies residues 91 to 118 (HRRGLPVRGQRTKTNARTRKGPRKPIKK).

The protein belongs to the universal ribosomal protein uS13 family. As to quaternary structure, part of the 30S ribosomal subunit. Forms a loose heterodimer with protein S19. Forms two bridges to the 50S subunit in the 70S ribosome.

Its function is as follows. Located at the top of the head of the 30S subunit, it contacts several helices of the 16S rRNA. In the 70S ribosome it contacts the 23S rRNA (bridge B1a) and protein L5 of the 50S subunit (bridge B1b), connecting the 2 subunits; these bridges are implicated in subunit movement. Contacts the tRNAs in the A and P-sites. The protein is Small ribosomal subunit protein uS13 of Photorhabdus laumondii subsp. laumondii (strain DSM 15139 / CIP 105565 / TT01) (Photorhabdus luminescens subsp. laumondii).